We begin with the raw amino-acid sequence, 890 residues long: MTQYTPMIQQYLKVKADYQDAFLFFRLGDFYEMFFEDAVKAAHELEITLTSRDGGSSERIPMCGVPYHAAKNYIEQLVEKGYKVAVCEQVEDPKTAKGVVRREVVQLITPGTMMEGRTIDEKENNFLAALTHFEDGSYALACNDLTTGQNTVTLLTGSVEDILLEVYATGSKEIVVDSSFSKDELNKLTETLKMTISYEDATAIPEGLEHLVKNVSQAKLIKAVGRLFNYVIRTQKRSLDHLQPVEIYYTNQFMKIDVHSKRNLELTETLRTKEKTGSLLWLLDKTKTAMGGRMLKQWMERPLIQKERIEERLEMVETFVNDYFLREDLKEKLKEVYDLERLAGKVAFGNVNARDLLQLRRSLLQVPAILEAISLLDNAYAARLIQGADPCESLTELLGRSIQENPPLSIKDGDIIKDGYNDKLDQYRYVSKNGKTWIAELEKRERDITGIKSLKIGYNRIFGYYIEVTKANLGALPEGRYERKQTLANAERFITDELKEKETLILEAEEKIVQLEYDLFTALREEVKVFIPKLQHLAKVISELDVLQSFATVSEEEQFVKPVLTTKREIFIKDGRHPVVEKVLNGKLYVPNDCIMPENMDVFLITGPNMSGKSTYMRQLALVTVMSQIGCFVPATEAVLPVFDQIFTRIGAADDLISGQSTFMVEMLEAKNAIANASERSLILFDEIGRGTSTYDGMALAQAIIEHIHDQIGAKTLFSTHYHELTVLEDSLDQLKNVHVSAIEENGKVVFLHKIQDGAADKSYGIHVAQLAELPDSLIARAKEVLAQLEGQEEIVIPKRVEVKEQEVIPEPVVVKEEPVAIEETKVDNEEESQLSFFGTEQSSKKQDKPVLDAKETAVLTQIKKIDLLDMTPLEAMNELYRLQKKLKKG.

An ATP-binding site is contributed by 607 to 614; the sequence is GPNMSGKS. The tract at residues 832-851 is disordered; that stretch reads ESQLSFFGTEQSSKKQDKPV.

Belongs to the DNA mismatch repair MutS family.

Its function is as follows. This protein is involved in the repair of mismatches in DNA. It is possible that it carries out the mismatch recognition step. This protein has a weak ATPase activity. The sequence is that of DNA mismatch repair protein MutS from Bacillus cereus (strain 03BB102).